The primary structure comprises 193 residues: dCTP deaminase (193 aa).

DCTP is bound by residues 110 to 115, D128, 136 to 138, Y171, K178, and Q182; these read RSSLAR and VLE. E138 (proton donor/acceptor) is an active-site residue. A disordered region spans residues 169–193; it reads RPYNRRQDAKYRDQQGAVASRIDKD.

Belongs to the dCTP deaminase family. As to quaternary structure, homotrimer.

The enzyme catalyses dCTP + H2O + H(+) = dUTP + NH4(+). Its pathway is pyrimidine metabolism; dUMP biosynthesis; dUMP from dCTP (dUTP route): step 1/2. In terms of biological role, catalyzes the deamination of dCTP to dUTP. This Salmonella arizonae (strain ATCC BAA-731 / CDC346-86 / RSK2980) protein is dCTP deaminase.